We begin with the raw amino-acid sequence, 268 residues long: Phosphonates import ATP-binding protein PhnC (268 aa).

The ABC transporter domain maps to 11–254 (LHAEAVTKRF…EVMAIYQRAE (244 aa)). Residue 43–50 (GLSGSGKS) coordinates ATP.

This sequence belongs to the ABC transporter superfamily. Phosphonates importer (TC 3.A.1.9.1) family. As to quaternary structure, the complex is composed of two ATP-binding proteins (PhnC), two transmembrane proteins (PhnE) and a solute-binding protein (PhnD).

It is found in the cell membrane. The enzyme catalyses phosphonate(out) + ATP + H2O = phosphonate(in) + ADP + phosphate + H(+). In terms of biological role, part of the ABC transporter complex PhnCDE involved in phosphonates import. Responsible for energy coupling to the transport system. The sequence is that of Phosphonates import ATP-binding protein PhnC from Nocardia farcinica (strain IFM 10152).